We begin with the raw amino-acid sequence, 317 residues long: Aspartate carbamoyltransferase catalytic subunit (317 aa).

2 residues coordinate carbamoyl phosphate: Arg66 and Thr67. Residue Lys94 coordinates L-aspartate. 3 residues coordinate carbamoyl phosphate: Arg116, His144, and Gln147. The L-aspartate site is built by Arg177 and Arg231. Carbamoyl phosphate contacts are provided by Gly272 and Pro273.

The protein belongs to the aspartate/ornithine carbamoyltransferase superfamily. ATCase family. Heterododecamer (2C3:3R2) of six catalytic PyrB chains organized as two trimers (C3), and six regulatory PyrI chains organized as three dimers (R2).

It carries out the reaction carbamoyl phosphate + L-aspartate = N-carbamoyl-L-aspartate + phosphate + H(+). It functions in the pathway pyrimidine metabolism; UMP biosynthesis via de novo pathway; (S)-dihydroorotate from bicarbonate: step 2/3. Catalyzes the condensation of carbamoyl phosphate and aspartate to form carbamoyl aspartate and inorganic phosphate, the committed step in the de novo pyrimidine nucleotide biosynthesis pathway. The chain is Aspartate carbamoyltransferase catalytic subunit from Bradyrhizobium sp. (strain BTAi1 / ATCC BAA-1182).